The primary structure comprises 211 residues: Transcriptional regulatory protein RcsA (211 aa).

Residues 135–200 (SEVHPFTLSQ…VIYHVVRLTD (66 aa)) form the HTH luxR-type domain. The segment at residues 159–178 (TIQISDKMQIKAKTVSSHKG) is a DNA-binding region (H-T-H motif).

This sequence belongs to the RcsA family.

Component of the Rcs signaling system, which controls transcription of numerous genes. Binds to DNA to regulate expression of genes. The polypeptide is Transcriptional regulatory protein RcsA (Erwinia amylovora (Fire blight bacteria)).